A 326-amino-acid polypeptide reads, in one-letter code: S-methyl-5'-thioadenosine phosphorylase (326 aa).

Residues S44, 86 to 87 (RH), and 119 to 120 (SA) each bind phosphate. Residue M220 participates in substrate binding. T221 contacts phosphate. 244 to 246 (DYD) provides a ligand contact to substrate.

The protein belongs to the PNP/MTAP phosphorylase family. MTAP subfamily. In terms of assembly, homohexamer. Dimer of a homotrimer.

It catalyses the reaction S-methyl-5'-thioadenosine + phosphate = 5-(methylsulfanyl)-alpha-D-ribose 1-phosphate + adenine. It participates in amino-acid biosynthesis; L-methionine biosynthesis via salvage pathway; S-methyl-5-thio-alpha-D-ribose 1-phosphate from S-methyl-5'-thioadenosine (phosphorylase route): step 1/1. Its function is as follows. Catalyzes the reversible phosphorylation of S-methyl-5'-thioadenosine (MTA) to adenine and 5-methylthioribose-1-phosphate. Involved in the breakdown of MTA, a major by-product of polyamine biosynthesis. Responsible for the first step in the methionine salvage pathway after MTA has been generated from S-adenosylmethionine. Has broad substrate specificity with 6-aminopurine nucleosides as preferred substrates. This Synechocystis sp. (strain PCC 6803 / GT-S) protein is S-methyl-5'-thioadenosine phosphorylase.